Reading from the N-terminus, the 205-residue chain is Glycerol-3-phosphate acyltransferase (205 aa).

The next 5 helical transmembrane spans lie at 13-33 (LLAL…GLIL), 68-88 (LLLD…LWGY), 90-110 (ASLV…WLGF), 120-140 (IGVL…IWLA), and 147-167 (YSSL…WVLG).

This sequence belongs to the PlsY family. As to quaternary structure, probably interacts with PlsX.

Its subcellular location is the cell inner membrane. It carries out the reaction an acyl phosphate + sn-glycerol 3-phosphate = a 1-acyl-sn-glycero-3-phosphate + phosphate. The protein operates within lipid metabolism; phospholipid metabolism. Its function is as follows. Catalyzes the transfer of an acyl group from acyl-phosphate (acyl-PO(4)) to glycerol-3-phosphate (G3P) to form lysophosphatidic acid (LPA). This enzyme utilizes acyl-phosphate as fatty acyl donor, but not acyl-CoA or acyl-ACP. The protein is Glycerol-3-phosphate acyltransferase of Agrobacterium fabrum (strain C58 / ATCC 33970) (Agrobacterium tumefaciens (strain C58)).